The following is a 322-amino-acid chain: Crystallin J1B (322 aa).

This sequence belongs to the ADP-ribosylglycohydrolase family. J1 crystallin subfamily. As to expression, expressed in the rhopalia. Present in both the large and small eyes.

This Tripedalia cystophora (Jellyfish) protein is Crystallin J1B.